The sequence spans 312 residues: Malate dehydrogenase (312 aa).

Residues 12 to 17 (GAGFTG) and Asp-36 contribute to the NAD(+) site. Positions 87 and 93 each coordinate substrate. NAD(+) contacts are provided by residues Asn-100 and 123–125 (LTN). Substrate is bound at residue Asn-125. Ser-149 carries the post-translational modification Phosphoserine. Arg-156 serves as a coordination point for substrate. The active-site Proton acceptor is the His-180.

This sequence belongs to the LDH/MDH superfamily. MDH type 3 family.

It carries out the reaction (S)-malate + NAD(+) = oxaloacetate + NADH + H(+). In terms of biological role, catalyzes the reversible oxidation of malate to oxaloacetate. The chain is Malate dehydrogenase from Geobacillus sp. (strain WCH70).